Here is a 243-residue protein sequence, read N- to C-terminus: Ubiquinone/menaquinone biosynthesis C-methyltransferase UbiE (243 aa).

S-adenosyl-L-methionine is bound by residues threonine 69, aspartate 90, and 116 to 117 (DA).

The protein belongs to the class I-like SAM-binding methyltransferase superfamily. MenG/UbiE family.

It catalyses the reaction a 2-demethylmenaquinol + S-adenosyl-L-methionine = a menaquinol + S-adenosyl-L-homocysteine + H(+). It carries out the reaction a 2-methoxy-6-(all-trans-polyprenyl)benzene-1,4-diol + S-adenosyl-L-methionine = a 5-methoxy-2-methyl-3-(all-trans-polyprenyl)benzene-1,4-diol + S-adenosyl-L-homocysteine + H(+). It participates in quinol/quinone metabolism; menaquinone biosynthesis; menaquinol from 1,4-dihydroxy-2-naphthoate: step 2/2. The protein operates within cofactor biosynthesis; ubiquinone biosynthesis. Its function is as follows. Methyltransferase required for the conversion of demethylmenaquinol (DMKH2) to menaquinol (MKH2) and the conversion of 2-polyprenyl-6-methoxy-1,4-benzoquinol (DDMQH2) to 2-polyprenyl-3-methyl-6-methoxy-1,4-benzoquinol (DMQH2). The chain is Ubiquinone/menaquinone biosynthesis C-methyltransferase UbiE from Burkholderia ambifaria (strain MC40-6).